The following is a 341-amino-acid chain: Uroporphyrinogen decarboxylase (341 aa).

Substrate-binding positions include 25–29 (RQAGR), Phe44, Asp74, Tyr151, Ser206, and His318.

It belongs to the uroporphyrinogen decarboxylase family. As to quaternary structure, homodimer.

The protein resides in the cytoplasm. The enzyme catalyses uroporphyrinogen III + 4 H(+) = coproporphyrinogen III + 4 CO2. It functions in the pathway porphyrin-containing compound metabolism; protoporphyrin-IX biosynthesis; coproporphyrinogen-III from 5-aminolevulinate: step 4/4. Functionally, catalyzes the decarboxylation of four acetate groups of uroporphyrinogen-III to yield coproporphyrinogen-III. This chain is Uroporphyrinogen decarboxylase, found in Flavobacterium johnsoniae (strain ATCC 17061 / DSM 2064 / JCM 8514 / BCRC 14874 / CCUG 350202 / NBRC 14942 / NCIMB 11054 / UW101) (Cytophaga johnsonae).